Here is a 486-residue protein sequence, read N- to C-terminus: UDP-N-acetylmuramate--L-alanine ligase (486 aa).

ATP is bound at residue 129–135; sequence GTHGKTT.

Belongs to the MurCDEF family.

It is found in the cytoplasm. The enzyme catalyses UDP-N-acetyl-alpha-D-muramate + L-alanine + ATP = UDP-N-acetyl-alpha-D-muramoyl-L-alanine + ADP + phosphate + H(+). Its pathway is cell wall biogenesis; peptidoglycan biosynthesis. In terms of biological role, cell wall formation. In Vibrio vulnificus (strain CMCP6), this protein is UDP-N-acetylmuramate--L-alanine ligase.